A 67-amino-acid chain; its full sequence is DNA-directed RNA polymerase subunit omega (67 aa).

The protein belongs to the RNA polymerase subunit omega family. The RNAP catalytic core consists of 2 alpha, 1 beta, 1 beta' and 1 omega subunit. When a sigma factor is associated with the core the holoenzyme is formed, which can initiate transcription.

It carries out the reaction RNA(n) + a ribonucleoside 5'-triphosphate = RNA(n+1) + diphosphate. Functionally, promotes RNA polymerase assembly. Latches the N- and C-terminal regions of the beta' subunit thereby facilitating its interaction with the beta and alpha subunits. The protein is DNA-directed RNA polymerase subunit omega of Burkholderia multivorans (strain ATCC 17616 / 249).